Reading from the N-terminus, the 571-residue chain is Proline--tRNA ligase (571 aa).

This sequence belongs to the class-II aminoacyl-tRNA synthetase family. ProS type 1 subfamily. In terms of assembly, homodimer.

It is found in the cytoplasm. The catalysed reaction is tRNA(Pro) + L-proline + ATP = L-prolyl-tRNA(Pro) + AMP + diphosphate. Functionally, catalyzes the attachment of proline to tRNA(Pro) in a two-step reaction: proline is first activated by ATP to form Pro-AMP and then transferred to the acceptor end of tRNA(Pro). As ProRS can inadvertently accommodate and process non-cognate amino acids such as alanine and cysteine, to avoid such errors it has two additional distinct editing activities against alanine. One activity is designated as 'pretransfer' editing and involves the tRNA(Pro)-independent hydrolysis of activated Ala-AMP. The other activity is designated 'posttransfer' editing and involves deacylation of mischarged Ala-tRNA(Pro). The misacylated Cys-tRNA(Pro) is not edited by ProRS. The polypeptide is Proline--tRNA ligase (Azotobacter vinelandii (strain DJ / ATCC BAA-1303)).